Consider the following 262-residue polypeptide: 3-dehydro-D-guloside 4-epimerase (262 aa).

Glu-146 acts as the Proton donor/acceptor in catalysis. 2 residues coordinate Mn(2+): Glu-146 and Asp-179. Residue His-182 coordinates substrate. His-205 serves as a coordination point for Mn(2+). Arg-211 lines the substrate pocket. Glu-240 serves as the catalytic Proton donor/acceptor. Residue Glu-240 participates in Mn(2+) binding.

The protein belongs to the hyi family. Requires Mn(2+) as cofactor.

The catalysed reaction is a 3-dehydro-D-guloside = a 3-dehydro-D-glucoside. In terms of biological role, catalyzes the epimerization at C4 of 3-dehydro-D-gulosides leading to 3-dehydro-D-glucosides. Probably functions in a metabolic pathway that transforms D-gulosides to D-glucosides. Can use methyl alpha-3-dehydro-D-glucoside and methyl beta-3-dehydro-D-glucoside as substrates in vitro. However, the actual specific physiological substrates for this metabolic pathway are unknown. Cannot act on D-psicose, D-fructose, D-tagatose, D-sorbose, L-xylulose, or L-ribulose. The protein is 3-dehydro-D-guloside 4-epimerase (ycjR) of Escherichia coli (strain K12).